The chain runs to 183 residues: ATP synthase subunit b, chloroplastic (183 aa).

A helical transmembrane segment spans residues 33-51; the sequence is IINLSVVIGVVVSFGGDAL.

This sequence belongs to the ATPase B chain family. As to quaternary structure, F-type ATPases have 2 components, F(1) - the catalytic core - and F(0) - the membrane proton channel. F(1) has five subunits: alpha(3), beta(3), gamma(1), delta(1), epsilon(1). F(0) has four main subunits: a(1), b(1), b'(1) and c(10-14). The alpha and beta chains form an alternating ring which encloses part of the gamma chain. F(1) is attached to F(0) by a central stalk formed by the gamma and epsilon chains, while a peripheral stalk is formed by the delta, b and b' chains.

The protein localises to the plastid. It localises to the chloroplast thylakoid membrane. In terms of biological role, f(1)F(0) ATP synthase produces ATP from ADP in the presence of a proton or sodium gradient. F-type ATPases consist of two structural domains, F(1) containing the extramembraneous catalytic core and F(0) containing the membrane proton channel, linked together by a central stalk and a peripheral stalk. During catalysis, ATP synthesis in the catalytic domain of F(1) is coupled via a rotary mechanism of the central stalk subunits to proton translocation. Its function is as follows. Component of the F(0) channel, it forms part of the peripheral stalk, linking F(1) to F(0). This chain is ATP synthase subunit b, chloroplastic, found in Oltmannsiellopsis viridis (Marine flagellate).